A 127-amino-acid polypeptide reads, in one-letter code: Aspartate 1-decarboxylase (127 aa).

Serine 25 serves as the catalytic Schiff-base intermediate with substrate; via pyruvic acid. Pyruvic acid (Ser) is present on serine 25. Threonine 57 is a binding site for substrate. Catalysis depends on tyrosine 58, which acts as the Proton donor. Residue glycine 73 to alanine 75 participates in substrate binding.

This sequence belongs to the PanD family. As to quaternary structure, heterooctamer of four alpha and four beta subunits. Pyruvate serves as cofactor. Is synthesized initially as an inactive proenzyme, which is activated by self-cleavage at a specific serine bond to produce a beta-subunit with a hydroxyl group at its C-terminus and an alpha-subunit with a pyruvoyl group at its N-terminus.

It is found in the cytoplasm. The enzyme catalyses L-aspartate + H(+) = beta-alanine + CO2. The protein operates within cofactor biosynthesis; (R)-pantothenate biosynthesis; beta-alanine from L-aspartate: step 1/1. Its function is as follows. Catalyzes the pyruvoyl-dependent decarboxylation of aspartate to produce beta-alanine. In Bacillus subtilis (strain 168), this protein is Aspartate 1-decarboxylase.